A 418-amino-acid chain; its full sequence is Isocitrate dehydrogenase [NADP] (418 aa).

NADP(+) is bound at residue threonine 106. Residues serine 115, asparagine 117, arginine 121, arginine 131, and arginine 155 each coordinate D-threo-isocitrate. Serine 115 carries the post-translational modification Phosphoserine. Phosphothreonine is present on threonine 193. Residue aspartate 309 participates in Mg(2+) binding. Residues 341-347 (HGTAPKY), asparagine 354, tyrosine 393, and arginine 397 contribute to the NADP(+) site.

The protein belongs to the isocitrate and isopropylmalate dehydrogenases family. In terms of assembly, homodimer. Requires Mg(2+) as cofactor. The cofactor is Mn(2+).

Its subcellular location is the secreted. The catalysed reaction is D-threo-isocitrate + NADP(+) = 2-oxoglutarate + CO2 + NADPH. Catalyzes the oxidative decarboxylation of isocitrate to 2-oxoglutarate and carbon dioxide with the concomitant reduction of NADP(+). The chain is Isocitrate dehydrogenase [NADP] (icd) from Pseudomonas aeruginosa (strain UCBPP-PA14).